The following is a 335-amino-acid chain: Ribosomal RNA large subunit methyltransferase F (335 aa).

This sequence belongs to the methyltransferase superfamily. METTL16/RlmF family.

Its subcellular location is the cytoplasm. It carries out the reaction adenosine(1618) in 23S rRNA + S-adenosyl-L-methionine = N(6)-methyladenosine(1618) in 23S rRNA + S-adenosyl-L-homocysteine + H(+). In terms of biological role, specifically methylates the adenine in position 1618 of 23S rRNA. The polypeptide is Ribosomal RNA large subunit methyltransferase F (Yersinia enterocolitica serotype O:8 / biotype 1B (strain NCTC 13174 / 8081)).